Consider the following 572-residue polypeptide: Asparagine--tRNA ligase, cytoplasmic 1 (572 aa).

Residue A2 is modified to N-acetylalanine. Residues 53–131 (VRIGGWVKSG…QQIELNVVKV (79 aa)) constitute a DNA-binding region (OB). The 57-residue stretch at 236 to 292 (DVEAARLIVIERGNVVAELKAAKASKEAITAAVAELKIAKETFAHIDERSRLRPGLP) folds into the WHEP-TRS domain.

This sequence belongs to the class-II aminoacyl-tRNA synthetase family.

Its subcellular location is the cytoplasm. The protein resides in the cytosol. It catalyses the reaction tRNA(Asn) + L-asparagine + ATP = L-asparaginyl-tRNA(Asn) + AMP + diphosphate + H(+). The sequence is that of Asparagine--tRNA ligase, cytoplasmic 1 from Arabidopsis thaliana (Mouse-ear cress).